The following is a 272-amino-acid chain: MAEVRWIYDLTIFLYAASVLFYFNDFLQSNRKVNRLAFGLLVVVWALQTAFFVSQAVMKGYFPVITLFETLFFYSWVLVGLSLAIHYFFRIDLLVFLPNIIGFVVLVMSMFLPETPIEAVSSILTSELLLTHVTLAMFSYGAFSLSMIFSAMYLLQHKMLKGRRWSPLLRRLPSLDQLEGYAYRMNMLGVPMLLLSIVLGIIWGKMVLGEKFLLDSKVLLSELVLAIYSLWLYQRYRIRCRCADSSQWNVLAFLLLLINFLGFTTSTFHDWW.

8 helical membrane-spanning segments follow: residues 7-27 (IYDL…NDFL), 38-58 (FGLL…QAVM), 65-85 (ITLF…SLAI), 93-113 (LLVF…MFLP), 135-155 (LAMF…MYLL), 188-208 (LGVP…KMVL), 212-232 (FLLD…SLWL), and 248-268 (WNVL…TSTF).

The protein localises to the cell membrane. In terms of biological role, required for HemL synthesis. This is Protein HemX (hemX) from Brevibacillus brevis (Bacillus brevis).